The sequence spans 350 residues: Putative [LysW]-lysine/[LysW]-ornithine hydrolase (350 aa).

His72 contributes to the Zn(2+) binding site. Asp74 is an active-site residue. Asp96 is a Zn(2+) binding site. Residue Glu128 is the Proton acceptor of the active site. Residues Glu129, Glu152, and His321 each coordinate Zn(2+).

The protein belongs to the peptidase M20A family. LysK subfamily. Zn(2+) serves as cofactor. Requires Co(2+) as cofactor.

It localises to the cytoplasm. It carries out the reaction [amino-group carrier protein]-C-terminal-gamma-(L-lysyl)-L-glutamate + H2O = [amino-group carrier protein]-C-terminal-L-glutamate + L-lysine. The catalysed reaction is [amino-group carrier protein]-C-terminal-gamma-(L-ornithyl)-L-glutamate + H2O = [amino-group carrier protein]-C-terminal-L-glutamate + L-ornithine. It participates in amino-acid biosynthesis; L-lysine biosynthesis via AAA pathway; L-lysine from L-alpha-aminoadipate (Thermus route): step 5/5. The protein operates within amino-acid biosynthesis; L-arginine biosynthesis. In terms of biological role, catalyzes the release of L-lysine from [LysW]-gamma-L-lysine and the release of L-ornithine from [LysW]-L-ornithine. This Aeropyrum pernix (strain ATCC 700893 / DSM 11879 / JCM 9820 / NBRC 100138 / K1) protein is Putative [LysW]-lysine/[LysW]-ornithine hydrolase.